The primary structure comprises 1003 residues: Glutamate receptor ionotropic, NMDA 3B (1003 aa).

The signal sequence occupies residues 1-24; that stretch reads MECVQTLWLSLALALARGSWVVRG. Over 25–574 the chain is Extracellular; that stretch reads HPQPCGVPTR…PIGAFMWPLH (550 aa). Residues asparagine 69, asparagine 212, asparagine 344, asparagine 451, and asparagine 465 are each glycosylated (N-linked (GlcNAc...) asparagine). Disulfide bonds link cysteine 439–cysteine 475 and cysteine 445–cysteine 476. Glycine contacts are provided by serine 531, serine 533, and arginine 538. Serine 533 and arginine 538 together coordinate D-serine. The chain crosses the membrane as a helical span at residues 575–594; it reads WSMWVGVFAALHLTALFLTL. Residues 595–615 lie on the Cytoplasmic side of the membrane; sequence YEWRSPYGLTPRGRNRGTVFS. The discontinuously helical intramembrane region spans 616–627; it reads YSSALNLCYAIL. The Cytoplasmic segment spans residues 628–641; it reads FGRTVSSKTPKCPT. The chain crosses the membrane as a helical span at residues 642-661; it reads GRFLMNLWAIFCLLVLSSYT. At 662 to 832 the chain is on the extracellular side; the sequence is ANLAAVMVGD…TLQMGVYHLS (171 aa). A glycine-binding site is contributed by serine 701. Serine 701, alanine 702, and aspartate 745 together coordinate D-serine. Position 745 (aspartate 745) interacts with glycine. Residue asparagine 786 is glycosylated (N-linked (GlcNAc...) asparagine). A helical membrane pass occupies residues 833–848; sequence GLFVLLCLGLGSALLT. The Cytoplasmic portion of the chain corresponds to 849-1003; that stretch reads SLGEHVFYRL…RLLHAAPAES (155 aa). The interval 883–912 is disordered; it reads LNTGPPEGQQERAEQECSGPKEEQPAADGA. The segment covering 891 to 906 has biased composition (basic and acidic residues); sequence QQERAEQECSGPKEEQ. Residues 947–986 are a coiled coil; the sequence is SNGPGVQAELRELELRIEAARERLRSALLRRGELRAQLGD. The involved in the trafficking and surface expression of NMDARs stretch occupies residues 952–985; that stretch reads VQAELRELELRIEAARERLRSALLRRGELRAQLG.

Belongs to the glutamate-gated ion channel (TC 1.A.10.1) family. NR3B/GRIN3B subfamily. In terms of assembly, forms heterotetrameric channels that contain at least two GluN1 subunits and at least a combination of one GluN2 and one GluN3 subunits (in vitro). Forms heterotetrameric channels composed of two GluN1/zeta subunits (GRIN1), and two identical GluN3 subunits (GRIN3A or GRIN3B) (in vitro). Does not form functional homomeric channels. As to expression, expressed in the facial nucleus and the ambiguus nucleus of the brainstem, pons, medulla, spinal cord and cerebellum.

It localises to the cell membrane. The protein resides in the postsynaptic cell membrane. It catalyses the reaction Ca(2+)(in) = Ca(2+)(out). The enzyme catalyses Na(+)(in) = Na(+)(out). Component of a non-conventional N-methyl-D-aspartate (NMDA) receptors (NMDARs) that function as heterotetrameric, ligand-gated cation channels with low calcium permeability and low voltage-dependent block by Mg(2+). Forms glutamatergic receptor complexes with GluN1 and GluN2 subunits which are activated by glycine binding to the GluN1 and GluN3 subunits and L-glutamate binding to GluN2 subunits. Forms excitatory glycinergic receptor complexes with GluN1 alone which are activated by glycine binding to the GluN1 and GluN3 subunits. GluN3B subunit also binds D-serine and, in the absence of glycine, activates glycinergic receptor complexes, but with lower efficacy than glycine. Each GluN3 subunit confers differential attributes to channel properties, including activation, deactivation and desensitization kinetics, pH sensitivity, Ca2(+) permeability, and binding to allosteric modulators. The protein is Glutamate receptor ionotropic, NMDA 3B of Mus musculus (Mouse).